The primary structure comprises 152 residues: Endoribonuclease YbeY (152 aa).

Positions 118, 122, and 128 each coordinate Zn(2+).

The protein belongs to the endoribonuclease YbeY family. Zn(2+) is required as a cofactor.

The protein localises to the cytoplasm. Single strand-specific metallo-endoribonuclease involved in late-stage 70S ribosome quality control and in maturation of the 3' terminus of the 16S rRNA. This Lacticaseibacillus casei (strain BL23) (Lactobacillus casei) protein is Endoribonuclease YbeY.